A 157-amino-acid polypeptide reads, in one-letter code: SsrA-binding protein (157 aa).

Belongs to the SmpB family.

The protein localises to the cytoplasm. Its function is as follows. Required for rescue of stalled ribosomes mediated by trans-translation. Binds to transfer-messenger RNA (tmRNA), required for stable association of tmRNA with ribosomes. tmRNA and SmpB together mimic tRNA shape, replacing the anticodon stem-loop with SmpB. tmRNA is encoded by the ssrA gene; the 2 termini fold to resemble tRNA(Ala) and it encodes a 'tag peptide', a short internal open reading frame. During trans-translation Ala-aminoacylated tmRNA acts like a tRNA, entering the A-site of stalled ribosomes, displacing the stalled mRNA. The ribosome then switches to translate the ORF on the tmRNA; the nascent peptide is terminated with the 'tag peptide' encoded by the tmRNA and targeted for degradation. The ribosome is freed to recommence translation, which seems to be the essential function of trans-translation. This Methylobacterium nodulans (strain LMG 21967 / CNCM I-2342 / ORS 2060) protein is SsrA-binding protein.